Reading from the N-terminus, the 256-residue chain is 5-keto-4-deoxy-D-glucarate aldolase (256 aa).

The active-site Proton acceptor is the His50. Gln151 contacts substrate. A Mg(2+)-binding site is contributed by Glu153. Residues Ser178 and Asp179 each contribute to the substrate site. Asp179 contributes to the Mg(2+) binding site.

It belongs to the HpcH/HpaI aldolase family. KDGluc aldolase subfamily. In terms of assembly, homohexamer; trimer of dimers. Requires Mg(2+) as cofactor.

It carries out the reaction 5-dehydro-4-deoxy-D-glucarate = 2-hydroxy-3-oxopropanoate + pyruvate. The catalysed reaction is 2-dehydro-3-deoxy-D-glucarate = 2-hydroxy-3-oxopropanoate + pyruvate. It functions in the pathway carbohydrate acid metabolism; galactarate degradation; D-glycerate from galactarate: step 2/3. In terms of biological role, catalyzes the reversible retro-aldol cleavage of both 5-keto-4-deoxy-D-glucarate and 2-keto-3-deoxy-D-glucarate to pyruvate and tartronic semialdehyde. The protein is 5-keto-4-deoxy-D-glucarate aldolase of Klebsiella pneumoniae subsp. pneumoniae (strain ATCC 700721 / MGH 78578).